A 372-amino-acid chain; its full sequence is Chemerin-like receptor 1 (372 aa).

The Extracellular portion of the chain corresponds to 1–39 (MEYEGYNDSSIYGEEYSDGSDYIVDLEEAGPLEAKVAEV). Asparagine 7 carries N-linked (GlcNAc...) asparagine glycosylation. The chain crosses the membrane as a helical span at residues 40–62 (FLVVIYSLVCFLGILGNGLVIVI). The Cytoplasmic portion of the chain corresponds to 63–73 (ATFKMKKTVNT). A helical transmembrane segment spans residues 74 to 95 (VWFVNLAVADFLFNIFLPIHIT). The Extracellular portion of the chain corresponds to 96–112 (YAAMDYHWVFGKAMCKI). Residues cysteine 110 and cysteine 188 are joined by a disulfide bond. Residues 113–133 (SSFLLSHNMYTSVFLLTVISF) traverse the membrane as a helical segment. Residues 134 to 152 (DRCISVLLPVWSQNHRSVR) lie on the Cytoplasmic side of the membrane. A helical transmembrane segment spans residues 153–174 (LAYMTCVVVWVLAFFLSSPSLV). The Extracellular portion of the chain corresponds to 175–223 (FRDTVSTSHGKITCFNNFSLAAPEPFSHSTHPRTDPVGYSRHVAVTVTR). Asparagine 191 carries N-linked (GlcNAc...) asparagine glycosylation. A helical membrane pass occupies residues 224–244 (FLCGFLIPVFIITACYLTIVF). The Cytoplasmic segment spans residues 245-260 (KLQRNRLAKTKKPFKI). A helical transmembrane segment spans residues 261-281 (IITIIITFFLCWCPYHTLYLL). Residues 282 to 299 (ELHHTAVPASVFSLGLPL) lie on the Extracellular side of the membrane. A helical membrane pass occupies residues 300–319 (ATAVAIANSCMNPILYVFMG). The Cytoplasmic portion of the chain corresponds to 320 to 372 (HDFKKFKVALFSRLVNALSEDTGPSSYPSHRSFTKMSSLIEKASVNEKETSTL). Position 338 is a phosphoserine (serine 338). Threonine 341 bears the Phosphothreonine mark. Phosphoserine is present on residues serine 348, serine 351, and serine 357. Threonine 371 carries the phosphothreonine modification.

This sequence belongs to the chemokine-like receptor (CMKLR) family. High expression in heart and lung, low in small intestines, colon, kidney, liver, uterus and brain.

It localises to the cell membrane. In terms of biological role, receptor for the chemoattractant adipokine chemerin/RARRES2 and for the omega-3 fatty acid derived molecule resolvin E1. Interaction with RARRES2 initiates activation of G proteins G(i)/G(o) and beta-arrestin pathways inducing cellular responses via second messenger pathways such as intracellular calcium mobilization, phosphorylation of MAP kinases MAPK1/MAPK3 (ERK1/2), TYRO3, MAPK14/P38MAPK and PI3K leading to multifunctional effects, like, reduction of immune responses, enhancing of adipogenesis and angionesis. Resolvin E1 down-regulates cytokine production in macrophages by reducing the activation of MAPK1/3 (ERK1/2) and NF-kappa-B. Positively regulates adipogenesis and adipocyte metabolism. The chain is Chemerin-like receptor 1 (Cmklr1) from Rattus norvegicus (Rat).